A 141-amino-acid polypeptide reads, in one-letter code: General odorant-binding protein 57b (141 aa).

An N-terminal signal peptide occupies residues 1–22 (MFIYRLVFIAPLILLLFSLAKA). 3 disulfide bridges follow: C39-C77, C73-C120, and C111-C129.

Belongs to the PBP/GOBP family.

Present in the aqueous fluid surrounding olfactory sensory dendrites and are thought to aid in the capture and transport of hydrophobic odorants into and through this fluid. The polypeptide is General odorant-binding protein 57b (Drosophila melanogaster (Fruit fly)).